We begin with the raw amino-acid sequence, 229 residues long: Potassium/proton antiporter CemA (229 aa).

A run of 4 helical transmembrane segments spans residues 6–26 (AFIP…ISLC), 107–127 (IFHF…SFWG), 152–172 (FLIL…GWEL), and 189–209 (ILSG…KYWI).

This sequence belongs to the CemA family.

The protein localises to the plastid. It localises to the chloroplast inner membrane. The enzyme catalyses K(+)(in) + H(+)(out) = K(+)(out) + H(+)(in). Functionally, contributes to K(+)/H(+) antiport activity by supporting proton efflux to control proton extrusion and homeostasis in chloroplasts in a light-dependent manner to modulate photosynthesis. Prevents excessive induction of non-photochemical quenching (NPQ) under continuous-light conditions. Indirectly promotes efficient inorganic carbon uptake into chloroplasts. The protein is Potassium/proton antiporter CemA of Aethionema grandiflorum (Persian stone-cress).